We begin with the raw amino-acid sequence, 260 residues long: Deoxyribonuclease-1 (260 aa).

N-linked (GlcNAc...) asparagine glycosylation occurs at asparagine 18. The active site involves glutamate 78. Cysteine 101 and cysteine 104 form a disulfide bridge. Residue histidine 134 is part of the active site. The cysteines at positions 173 and 209 are disulfide-linked.

Belongs to the DNase I family. Ca(2+) is required as a cofactor. The cofactor is Mg(2+).

The protein resides in the secreted. It is found in the zymogen granule. The protein localises to the nucleus envelope. It catalyses the reaction Endonucleolytic cleavage to 5'-phosphodinucleotide and 5'-phosphooligonucleotide end-products.. In terms of biological role, serum endocuclease secreted into body fluids by a wide variety of exocrine and endocrine organs. Expressed by non-hematopoietic tissues and preferentially cleaves protein-free DNA. Among other functions, seems to be involved in cell death by apoptosis. Binds specifically to G-actin and blocks actin polymerization. Together with DNASE1L3, plays a key role in degrading neutrophil extracellular traps (NETs). NETs are mainly composed of DNA fibers and are released by neutrophils to bind pathogens during inflammation. Degradation of intravascular NETs by DNASE1 and DNASE1L3 is required to prevent formation of clots that obstruct blood vessels and cause organ damage following inflammation. This chain is Deoxyribonuclease-1 (DNASE1), found in Ovis aries (Sheep).